The chain runs to 691 residues: Elongation factor G (691 aa).

Residues 6–281 (SKYRNIGIMA…GVVDFLPSPI (276 aa)) form the tr-type G domain. GTP contacts are provided by residues 15–22 (AHIDAGKT), 79–83 (DTPGH), and 133–136 (NKMD).

The protein belongs to the TRAFAC class translation factor GTPase superfamily. Classic translation factor GTPase family. EF-G/EF-2 subfamily.

It localises to the cytoplasm. Catalyzes the GTP-dependent ribosomal translocation step during translation elongation. During this step, the ribosome changes from the pre-translocational (PRE) to the post-translocational (POST) state as the newly formed A-site-bound peptidyl-tRNA and P-site-bound deacylated tRNA move to the P and E sites, respectively. Catalyzes the coordinated movement of the two tRNA molecules, the mRNA and conformational changes in the ribosome. The protein is Elongation factor G of Wolbachia pipientis wMel.